The following is a 386-amino-acid chain: L-lactate dehydrogenase (386 aa).

The 380-residue stretch at 1–380 (MIISAASDYR…SGDALSRVTR (380 aa)) folds into the FMN hydroxy acid dehydrogenase domain. Substrate is bound at residue tyrosine 24. Positions 106 and 127 each coordinate FMN. A substrate-binding site is contributed by tyrosine 129. Threonine 155 serves as a coordination point for FMN. Residue arginine 164 participates in substrate binding. Lysine 251 contacts FMN. Histidine 275 functions as the Proton acceptor in the catalytic mechanism. Substrate is bound at residue arginine 278. 306 to 330 (DSGIRSGLDVVRMLALGADAVLLGR) lines the FMN pocket.

Belongs to the FMN-dependent alpha-hydroxy acid dehydrogenase family. FMN is required as a cofactor.

It is found in the cell inner membrane. It catalyses the reaction (S)-lactate + A = pyruvate + AH2. In terms of biological role, catalyzes the conversion of L-lactate to pyruvate. Is coupled to the respiratory chain. This chain is L-lactate dehydrogenase, found in Xanthomonas campestris pv. campestris (strain 8004).